Reading from the N-terminus, the 245-residue chain is MIKGTHWPNLVSKSYTDACETSKVMDFNFIFAHMYCADMSTDGKLQAGVRAAAFGLVDDKHFELYKRRIENALFRYRDQCDGNAAPPARLSDNGDCCHHFVRDAARVVESIKSVEATSVGINVIVLLPYLKQLQIALKMLSDAFACCAKTIGGLQMYVQDLLSHCLLYADRVEAAGRALQVMNLFLNSGGPLYECDLCKEASADPRFLKPKECCQYSLCYACCVALWKTASTHAKCPACSTSFKS.

An RING-type zinc finger spans residues 195–240; it reads CDLCKEASADPRFLKPKECCQYSLCYACCVALWKTASTHAKCPACS.

The polypeptide is Immediate-early protein IE-0 (IE-0) (Orgyia pseudotsugata (Douglas-fir tussock moth)).